Consider the following 41-residue polypeptide: Large ribosomal subunit protein bL36A (41 aa).

The protein belongs to the bacterial ribosomal protein bL36 family.

The chain is Large ribosomal subunit protein bL36A from Vibrio cholerae serotype O1 (strain ATCC 39541 / Classical Ogawa 395 / O395).